Consider the following 1093-residue polypeptide: GPI ethanolamine phosphate transferase 3, catalytic subunit (1093 aa).

Residues 4-24 (VSVLLFLAWVCFLFYAGIALF) traverse the membrane as a helical segment. N268 carries an N-linked (GlcNAc...) asparagine glycan. 9 helical membrane-spanning segments follow: residues 460–480 (AAAC…GFLF), 483–503 (LLLI…GVSV), 512–532 (VVLG…KAWV), 669–689 (LWYG…RLWL), 702–722 (VLFV…YWAL), 748–768 (VMGL…TVLV), 831–851 (SVYS…LMLL), 856–876 (VSLV…LLAA), and 945–965 (FASH…PFLC). The segment at 971–991 (KRRQPLPGSESEARVRPEEEE) is disordered. 2 helical membrane passes run 1018-1038 (LKYL…ASIL) and 1052-1072 (FIFE…GIAL).

It belongs to the PIGG/PIGN/PIGO family. PIGO subfamily. As to quaternary structure, forms the ethanolamine phosphate transferase 3 complex composed by PIGO and PIGF. PIGF is required to stabilize PIGO.

It is found in the endoplasmic reticulum membrane. The protein operates within glycolipid biosynthesis; glycosylphosphatidylinositol-anchor biosynthesis. Catalytic subunit of the ethanolamine phosphate transferase 3 complex that transfers an ethanolamine phosphate (EtNP) from a phosphatidylethanolamine (PE) to the 6-OH position of the third alpha-1,2-linked mannose of the an alpha-D-Man-(1-&gt;2)-alpha-D-Man-(1-&gt;6)-2-PEtn-alpha-D-Man-(1-&gt;4)-alpha-D-GlcN-(1-&gt;6)-(1-radyl,2-acyl-sn-glycero-3-phospho)-2-acyl-inositol (also termed H6) intermediate to generate a 6-PEtn-alpha-D-Man-(1-&gt;2)-alpha-D-Man-(1-&gt;6)-2-PEtn-alpha-D-Man-(1-&gt;4)-alpha-D-GlcN-(1-&gt;6)-(1-radyl,2-acyl-sn-glycero-3-phospho)-2-acyl-inositol (also termed H7) and participates in the tenth step of the glycosylphosphatidylinositol-anchor biosynthesis. The sequence is that of GPI ethanolamine phosphate transferase 3, catalytic subunit from Mus musculus (Mouse).